A 121-amino-acid chain; its full sequence is Small ribosomal subunit protein uS11c (121 aa).

The protein belongs to the universal ribosomal protein uS11 family. Part of the 30S ribosomal subunit.

The protein localises to the plastid. It localises to the chloroplast. The protein is Small ribosomal subunit protein uS11c of Cyanidioschyzon merolae (strain NIES-3377 / 10D) (Unicellular red alga).